The primary structure comprises 207 residues: MSLKIKVSKKVKNQCESTKTIKSQVEIMDETKRSILCEVSHCSIEKEIHCFWDRHKITGLVIRCPLRYKPKQIVKVYKSDVSKEEYTIKENVVKFQNDVGNFKTITDNLEVTDAFCSFNCCLAWIRDNKHDRRYDESEMLLQKIYSKSQHGIPDTSLKPSPHWRTLTVYGGTLSLEEFRKNTFKTKFFYNGPILDTGYLFSKKISVC.

It belongs to the IIV-6 350L family.

This is an uncharacterized protein from Invertebrate iridescent virus 6 (IIV-6).